The chain runs to 760 residues: Exostosin-1 (760 aa).

The Cytoplasmic segment spans residues 1-6 (MQAKKR). The helical; Signal-anchor for type II membrane protein transmembrane segment at 7-25 (YILVFVSCAFLAYAYFGGY) threads the bilayer. At 26-760 (RLKVSPLRPR…KYRQIELVGS (735 aa)) the chain is on the lumenal side. Asn71 and Asn327 each carry an N-linked (GlcNAc...) asparagine glycan. Arg437 is a UDP-N-acetyl-alpha-D-glucosamine binding site. Asn476 carries an N-linked (GlcNAc...) asparagine glycan. The disordered stretch occupies residues 540-560 (LGGSTRSQGAGPTSQTTEGRP). Residues 541–560 (GGSTRSQGAGPTSQTTEGRP) show a composition bias toward polar residues. Residues Arg565, Asp581, Glu582, Asp583, Glu669, Asp670, and Arg713 each contribute to the UDP-N-acetyl-alpha-D-glucosamine site. Asp583 contacts Mn(2+). A disulfide bridge links Cys668 with Cys716. Asp670 is a catalytic residue.

Belongs to the glycosyltransferase 47 family. Interacts with sau. It depends on Mn(2+) as a cofactor. Ubiquitously expressed in early embryos. Later (in stage 10 embryos), it is expressed at higher level in the nervous system. Ubiquitously expressed in wing imaginal disk.

The protein localises to the endoplasmic reticulum membrane. Its subcellular location is the golgi apparatus membrane. The catalysed reaction is 3-O-{[(1-&gt;4)-beta-D-GlcA-(1-&gt;4)-alpha-D-GlcNAc](n)-(1-&gt;4)-beta-D-GlcA-(1-&gt;3)-beta-D-Gal-(1-&gt;3)-beta-D-Gal-(1-&gt;4)-beta-D-Xyl}-L-seryl-[protein] + UDP-N-acetyl-alpha-D-glucosamine = 3-O-{alpha-D-GlcNAc-[(1-&gt;4)-beta-D-GlcA-(1-&gt;4)-alpha-D-GlcNAc](n)-(1-&gt;4)-beta-D-GlcA-(1-&gt;3)-beta-D-Gal-(1-&gt;3)-beta-D-Gal-(1-&gt;4)-beta-D-Xyl}-L-seryl-[protein] + UDP + H(+). It carries out the reaction 3-O-{alpha-D-GlcNAc-[(1-&gt;4)-beta-D-GlcA-(1-&gt;4)-alpha-D-GlcNAc](n)-(1-&gt;4)-beta-D-GlcA-(1-&gt;3)-beta-D-Gal-(1-&gt;3)-beta-D-Gal-(1-&gt;4)-beta-D-Xyl}-L-seryl-[protein] + UDP-alpha-D-glucuronate = 3-O-{[(1-&gt;4)-beta-D-GlcA-(1-&gt;4)-alpha-D-GlcNAc](n+1)-(1-&gt;4)-beta-D-GlcA-(1-&gt;3)-beta-D-Gal-(1-&gt;3)-beta-D-Gal-(1-&gt;4)-beta-D-Xyl}-L-seryl-[protein] + UDP + H(+). It participates in protein modification; protein glycosylation. It functions in the pathway glycan metabolism; heparan sulfate biosynthesis. Its pathway is glycan metabolism; heparin biosynthesis. In terms of biological role, glycosyltransferase required for the biosynthesis of heparan-sulfate and responsible for the alternating addition of beta-1-4-linked glucuronic acid (GlcA) and alpha-1-4-linked N-acetylglucosamine (GlcNAc) units to nascent heparan sulfate chains. Botv is the trigger of heparan sulfate chain initiation and polymerization takes place by a complex of ttv and sotv. Plays a central role in the diffusion of morphogens hedgehog (hh), wingless (wg) and decapentaplegic (dpp) via its role in heparan sulfate proteoglycans (HSPGs) biosynthesis which are required for movement of hh, dpp and wg morphogens. The sequence is that of Exostosin-1 (ttv) from Drosophila melanogaster (Fruit fly).